The following is a 183-amino-acid chain: MMSKQDAAKAPVNPIVLGKMGSSYGIRGWLRVFSSTEDAESIFDYQPWFIQQAGQWQQVQLESWKHHNQDMIIKLKGVDDRDAANLLTNCEIVVDSSQLPDLEEGDYYWKDLIGCQVVTTEGYSLGKVIDMMETGSNDVLVVKANLKDAFGIKERLLPFLDGQVIKKVDLATQTIEVDWDPGF.

In terms of domain architecture, PRC barrel spans 104–183 (EGDYYWKDLI…TIEVDWDPGF (80 aa)).

This sequence belongs to the RimM family. Binds ribosomal protein uS19.

Its subcellular location is the cytoplasm. In terms of biological role, an accessory protein needed during the final step in the assembly of 30S ribosomal subunit, possibly for assembly of the head region. Essential for efficient processing of 16S rRNA. May be needed both before and after RbfA during the maturation of 16S rRNA. It has affinity for free ribosomal 30S subunits but not for 70S ribosomes. The polypeptide is Ribosome maturation factor RimM (Cronobacter sakazakii (strain ATCC BAA-894) (Enterobacter sakazakii)).